A 221-amino-acid polypeptide reads, in one-letter code: NAD(P)H-hydrate epimerase (221 aa).

One can recognise a YjeF N-terminal domain in the interval 10–210; it reads MQQIDNYTIE…DVGMLIPDDF (201 aa). A (6S)-NADPHX-binding site is contributed by 58–62; that stretch reads NNGAD. Residues Asn-59 and Asp-120 each coordinate K(+). (6S)-NADPHX-binding positions include 124-130 and Asp-153; that span reads GVGLNNV. Residue Thr-156 participates in K(+) binding.

The protein belongs to the NnrE/AIBP family. It depends on K(+) as a cofactor.

It catalyses the reaction (6R)-NADHX = (6S)-NADHX. It carries out the reaction (6R)-NADPHX = (6S)-NADPHX. Functionally, catalyzes the epimerization of the S- and R-forms of NAD(P)HX, a damaged form of NAD(P)H that is a result of enzymatic or heat-dependent hydration. This is a prerequisite for the S-specific NAD(P)H-hydrate dehydratase to allow the repair of both epimers of NAD(P)HX. This is NAD(P)H-hydrate epimerase from Leuconostoc mesenteroides subsp. mesenteroides (strain ATCC 8293 / DSM 20343 / BCRC 11652 / CCM 1803 / JCM 6124 / NCDO 523 / NBRC 100496 / NCIMB 8023 / NCTC 12954 / NRRL B-1118 / 37Y).